We begin with the raw amino-acid sequence, 951 residues long: Glycine dehydrogenase (decarboxylating) (951 aa).

The residue at position 709 (Lys-709) is an N6-(pyridoxal phosphate)lysine.

The protein belongs to the GcvP family. As to quaternary structure, the glycine cleavage system is composed of four proteins: P, T, L and H. Requires pyridoxal 5'-phosphate as cofactor.

The enzyme catalyses N(6)-[(R)-lipoyl]-L-lysyl-[glycine-cleavage complex H protein] + glycine + H(+) = N(6)-[(R)-S(8)-aminomethyldihydrolipoyl]-L-lysyl-[glycine-cleavage complex H protein] + CO2. In terms of biological role, the glycine cleavage system catalyzes the degradation of glycine. The P protein binds the alpha-amino group of glycine through its pyridoxal phosphate cofactor; CO(2) is released and the remaining methylamine moiety is then transferred to the lipoamide cofactor of the H protein. In Gluconobacter oxydans (strain 621H) (Gluconobacter suboxydans), this protein is Glycine dehydrogenase (decarboxylating).